A 354-amino-acid chain; its full sequence is Uroporphyrinogen decarboxylase (354 aa).

Residues 27 to 31, phenylalanine 46, aspartate 77, tyrosine 154, serine 209, and histidine 327 contribute to the substrate site; that span reads RQAGR.

It belongs to the uroporphyrinogen decarboxylase family. In terms of assembly, homodimer.

It localises to the cytoplasm. The catalysed reaction is uroporphyrinogen III + 4 H(+) = coproporphyrinogen III + 4 CO2. It participates in porphyrin-containing compound metabolism; protoporphyrin-IX biosynthesis; coproporphyrinogen-III from 5-aminolevulinate: step 4/4. Functionally, catalyzes the decarboxylation of four acetate groups of uroporphyrinogen-III to yield coproporphyrinogen-III. This chain is Uroporphyrinogen decarboxylase, found in Shewanella oneidensis (strain ATCC 700550 / JCM 31522 / CIP 106686 / LMG 19005 / NCIMB 14063 / MR-1).